The chain runs to 224 residues: Casparian strip membrane protein 1 (224 aa).

The tract at residues 1–22 is disordered; that stretch reads MSSGEPAAVSIPIHDHHGKAPA. Topologically, residues 1–62 are cytoplasmic; it reads MSSGEPAAVS…RGDHHRGSRC (62 aa). Residues 63–83 form a helical membrane-spanning segment; the sequence is LAFLDFILRIAAFGPALAAAI. At 84 to 110 the chain is on the extracellular side; the sequence is STGTSDETLSVFTEFYQFRARFDDFPA. A helical membrane pass occupies residues 111-131; the sequence is FLFFLVANAIVAGYLVLSLPF. At 132 to 145 the chain is on the cytoplasmic side; it reads SAVLVIRPQTIGLR. The chain crosses the membrane as a helical span at residues 146-166; that stretch reads LLLLVCDMIMAAMLTAAASAA. Residues 167–200 lie on the Extracellular side of the membrane; sequence AAIVDLAHNGNLRANWVAICMQFHGFCQRTSGSV. Residues 201–221 form a helical membrane-spanning segment; it reads VASFLTVVILMFLVILAACSI. Residues 222–224 lie on the Cytoplasmic side of the membrane; that stretch reads RKR.

It belongs to the Casparian strip membrane proteins (CASP) family. As to quaternary structure, homodimer and heterodimers.

The protein resides in the cell membrane. Its function is as follows. Regulates membrane-cell wall junctions and localized cell wall deposition. Required for establishment of the Casparian strip membrane domain (CSD) and the subsequent formation of Casparian strips, a cell wall modification of the root endodermis that determines an apoplastic barrier between the intraorganismal apoplasm and the extraorganismal apoplasm and prevents lateral diffusion. This chain is Casparian strip membrane protein 1, found in Oryza sativa subsp. indica (Rice).